A 190-amino-acid chain; its full sequence is Outer-membrane lipoprotein LolB (190 aa).

The signal sequence occupies residues 1-16; sequence MRLRFSLLLTVSLLAG. Cys17 carries the N-palmitoyl cysteine lipid modification. Residue Cys17 is the site of S-diacylglycerol cysteine attachment.

Belongs to the LolB family. Monomer.

The protein resides in the cell outer membrane. In terms of biological role, plays a critical role in the incorporation of lipoproteins in the outer membrane after they are released by the LolA protein. In Dechloromonas aromatica (strain RCB), this protein is Outer-membrane lipoprotein LolB.